The following is a 545-amino-acid chain: Threonine--tRNA ligase catalytic subunit (545 aa).

Residues 139 to 433 are catalytic; it reads DHRLIGEKLD…LLEHFKGKLP (295 aa). Residues cysteine 231, histidine 282, and histidine 410 each coordinate Zn(2+).

It belongs to the class-II aminoacyl-tRNA synthetase family. Homodimer. Probably interacts with its editing subunit. Requires Zn(2+) as cofactor.

The protein localises to the cytoplasm. The catalysed reaction is tRNA(Thr) + L-threonine + ATP = L-threonyl-tRNA(Thr) + AMP + diphosphate + H(+). In terms of biological role, catalyzes the attachment of threonine to tRNA(Thr) in a two-step reaction: L-threonine is first activated by ATP to form Thr-AMP and then transferred to the acceptor end of tRNA(Thr). Also activates L-serine and transfers it to tRNA(Thr) but cannot deacylate incorrectly charged amino acid; unlike most archaea the editing function is found in a freestanding protein. The polypeptide is Threonine--tRNA ligase catalytic subunit (Saccharolobus islandicus (strain M.16.4 / Kamchatka #3) (Sulfolobus islandicus)).